A 273-amino-acid chain; its full sequence is Hemin import ATP-binding protein HmuV (273 aa).

An ABC transporter domain is found at 2–256; it reads LTAHHLDVAR…AHIAQCYGFA (255 aa). Position 34-41 (34-41) interacts with ATP; the sequence is GRNGAGKS.

The protein belongs to the ABC transporter superfamily. Heme (hemin) importer (TC 3.A.1.14.5) family. The complex is composed of two ATP-binding proteins (HmuV), two transmembrane proteins (HmuU) and a solute-binding protein (HmuT).

The protein localises to the cell inner membrane. Functionally, part of the ABC transporter complex HmuTUV involved in hemin import. Responsible for energy coupling to the transport system. This Burkholderia ambifaria (strain ATCC BAA-244 / DSM 16087 / CCUG 44356 / LMG 19182 / AMMD) (Burkholderia cepacia (strain AMMD)) protein is Hemin import ATP-binding protein HmuV.